A 337-amino-acid chain; its full sequence is Biotin synthase (337 aa).

One can recognise a Radical SAM core domain in the interval 62 to 289; it reads NAVQLSTLIS…KAMVRLSAGR (228 aa). 3 residues coordinate [4Fe-4S] cluster: C77, C81, and C84. Residues C121, C152, C212, and R284 each contribute to the [2Fe-2S] cluster site.

The protein belongs to the radical SAM superfamily. Biotin synthase family. As to quaternary structure, homodimer. [4Fe-4S] cluster is required as a cofactor. [2Fe-2S] cluster serves as cofactor.

It carries out the reaction (4R,5S)-dethiobiotin + (sulfur carrier)-SH + 2 reduced [2Fe-2S]-[ferredoxin] + 2 S-adenosyl-L-methionine = (sulfur carrier)-H + biotin + 2 5'-deoxyadenosine + 2 L-methionine + 2 oxidized [2Fe-2S]-[ferredoxin]. Its pathway is cofactor biosynthesis; biotin biosynthesis; biotin from 7,8-diaminononanoate: step 2/2. Functionally, catalyzes the conversion of dethiobiotin (DTB) to biotin by the insertion of a sulfur atom into dethiobiotin via a radical-based mechanism. This is Biotin synthase from Nitrosomonas europaea (strain ATCC 19718 / CIP 103999 / KCTC 2705 / NBRC 14298).